The sequence spans 300 residues: Tyrosine recombinase XerC (300 aa).

The 87-residue stretch at 4–90 (VALSLDVSRF…ALRSFFDWLV (87 aa)) folds into the Core-binding (CB) domain. The region spanning 111–290 (HLPKNIDVDD…DFQHLASVYD (180 aa)) is the Tyr recombinase domain. Active-site residues include Arg150, Lys174, His242, Arg245, and His268. The O-(3'-phospho-DNA)-tyrosine intermediate role is filled by Tyr277.

It belongs to the 'phage' integrase family. XerC subfamily. Forms a cyclic heterotetrameric complex composed of two molecules of XerC and two molecules of XerD, in which XerC interacts with XerD via its C-terminal region, XerD interacts with XerC via its C-terminal region and so on.

Its subcellular location is the cytoplasm. Its activity is regulated as follows. FtsK may regulate the catalytic switch between XerC and XerD in the heterotetrameric complex during the two steps of the recombination process. Functionally, site-specific tyrosine recombinase, which acts by catalyzing the cutting and rejoining of the recombining DNA molecules. Binds cooperatively to specific DNA consensus sequences that are separated from XerD binding sites by a short central region, forming the heterotetrameric XerC-XerD complex that recombines DNA substrates. The complex is essential to convert dimers of the bacterial chromosome into monomers to permit their segregation at cell division. It also contributes to the segregational stability of plasmids. In the complex XerC specifically exchanges the top DNA strands. This Salmonella typhi protein is Tyrosine recombinase XerC.